The following is a 270-amino-acid chain: Orotidine 5'-phosphate decarboxylase (270 aa).

Catalysis depends on lysine 89, which acts as the Proton donor.

Belongs to the OMP decarboxylase family. Type 2 subfamily.

It carries out the reaction orotidine 5'-phosphate + H(+) = UMP + CO2. It participates in pyrimidine metabolism; UMP biosynthesis via de novo pathway; UMP from orotate: step 2/2. The chain is Orotidine 5'-phosphate decarboxylase from Dehalococcoides mccartyi (strain ATCC BAA-2266 / KCTC 15142 / 195) (Dehalococcoides ethenogenes (strain 195)).